The primary structure comprises 168 residues: Protein-export protein SecB (168 aa).

It belongs to the SecB family. As to quaternary structure, homotetramer, a dimer of dimers. One homotetramer interacts with 1 SecA dimer.

It localises to the cytoplasm. In terms of biological role, one of the proteins required for the normal export of preproteins out of the cell cytoplasm. It is a molecular chaperone that binds to a subset of precursor proteins, maintaining them in a translocation-competent state. It also specifically binds to its receptor SecA. This Thioalkalivibrio sulfidiphilus (strain HL-EbGR7) protein is Protein-export protein SecB.